Consider the following 217-residue polypeptide: 7-cyano-7-deazaguanine synthase (217 aa).

10–20 (FSGGQDSTTCL) contacts ATP. Zn(2+) contacts are provided by cysteine 185, cysteine 194, cysteine 197, and cysteine 200.

This sequence belongs to the QueC family. As to quaternary structure, homodimer. The cofactor is Zn(2+).

The catalysed reaction is 7-carboxy-7-deazaguanine + NH4(+) + ATP = 7-cyano-7-deazaguanine + ADP + phosphate + H2O + H(+). It functions in the pathway purine metabolism; 7-cyano-7-deazaguanine biosynthesis. Catalyzes the ATP-dependent conversion of 7-carboxy-7-deazaguanine (CDG) to 7-cyano-7-deazaguanine (preQ(0)). The protein is 7-cyano-7-deazaguanine synthase of Streptococcus thermophilus (strain CNRZ 1066).